The chain runs to 334 residues: RNA 3'-terminal phosphate cyclase (334 aa).

Residue 279–282 (HMGD) participates in ATP binding. His303 (tele-AMP-histidine intermediate) is an active-site residue.

The protein belongs to the RNA 3'-terminal cyclase family. Type 1 subfamily.

It is found in the cytoplasm. The catalysed reaction is a 3'-end 3'-phospho-ribonucleotide-RNA + ATP = a 3'-end 2',3'-cyclophospho-ribonucleotide-RNA + AMP + diphosphate. Its function is as follows. Catalyzes the conversion of 3'-phosphate to a 2',3'-cyclic phosphodiester at the end of RNA. The mechanism of action of the enzyme occurs in 3 steps: (A) adenylation of the enzyme by ATP; (B) transfer of adenylate to an RNA-N3'P to produce RNA-N3'PP5'A; (C) and attack of the adjacent 2'-hydroxyl on the 3'-phosphorus in the diester linkage to produce the cyclic end product. The biological role of this enzyme is unknown but it is likely to function in some aspects of cellular RNA processing. This is RNA 3'-terminal phosphate cyclase from Metallosphaera sedula (strain ATCC 51363 / DSM 5348 / JCM 9185 / NBRC 15509 / TH2).